The chain runs to 749 residues: Protein phosphatase 1E (749 aa).

The segment at 21–128 (EFRGPCGGGE…PPLPPLPRPL (108 aa)) is disordered. Tandem repeats lie at residues 31–32 (PE), 33–34 (PE), and 35–36 (PE). Residues 31–44 (PEPEPESEPEPEPE) are 7 X 2 AA tandem repeats of P-E. The segment covering 31-45 (PEPEPESEPEPEPEA) has biased composition (acidic residues). Residues 37 to 38 (SE) form a 4; approximate repeat. Repeat copies occupy residues 39-40 (PE), 41-42 (PE), and 43-44 (PE). A compositionally biased stretch (low complexity) spans 46–55 (ELVAAEAAEA). The segment covering 69–102 (ATEEGEQDQDPEPEDEAVEEETATEGEEEEEEEA) has biased composition (acidic residues). Pro residues predominate over residues 110 to 126 (VPPPPQPQLPPLPPLPR). The PPM-type phosphatase domain maps to 224–485 (QIYYETSIHA…DNITVIVVFL (262 aa)). Residues D270, G271, D432, and D476 each contribute to the Mn(2+) site. The disordered stretch occupies residues 495–537 (SEESEWTENSFQGGQEDGGDDKETHGECKRPWPQHQCSAPADL). Residues 515 to 524 (DKETHGECKR) show a composition bias toward basic and acidic residues. Phosphoserine occurs at positions 532 and 545. A disordered region spans residues 608 to 627 (VKSSLPERSGAGEPRVSFNL).

It belongs to the PP2C family. Heterotrimer. Interacts with PAX1 and ARHGEF6 (or ARHGEF7). It depends on Mg(2+) as a cofactor. Mn(2+) serves as cofactor.

It is found in the nucleus. Its subcellular location is the cytoplasm. It catalyses the reaction O-phospho-L-seryl-[protein] + H2O = L-seryl-[protein] + phosphate. It carries out the reaction O-phospho-L-threonyl-[protein] + H2O = L-threonyl-[protein] + phosphate. Protein phosphatase that inactivates multifunctional CaM kinases such as CAMK4 and CAMK2. Dephosphorylates and inactivates PAK. May play a role in the inhibition of actin fiber stress breakdown and in morphological changes driven by TNK2/CDC42. Dephosphorylates PRKAA2. This chain is Protein phosphatase 1E (Ppm1e), found in Mus musculus (Mouse).